Here is a 62-residue protein sequence, read N- to C-terminus: Large ribosomal subunit protein eL37 (62 aa).

The Zn(2+) site is built by cysteine 20, cysteine 23, cysteine 35, and cysteine 38. Residues 20–38 (CRRCGRRAYHVRKGYCAAC) form a C4-type zinc finger.

The protein belongs to the eukaryotic ribosomal protein eL37 family. Zn(2+) serves as cofactor.

Binds to the 23S rRNA. The sequence is that of Large ribosomal subunit protein eL37 from Methanopyrus kandleri (strain AV19 / DSM 6324 / JCM 9639 / NBRC 100938).